The primary structure comprises 88 residues: Large ribosomal subunit protein bL27 (88 aa).

The segment at 1–26 (MAHKKGTGSTRNGRDSNSKRLGVKAY) is disordered.

This sequence belongs to the bacterial ribosomal protein bL27 family.

The chain is Large ribosomal subunit protein bL27 from Prochlorococcus marinus (strain MIT 9211).